We begin with the raw amino-acid sequence, 429 residues long: Inner membrane transport protein RhmT (429 aa).

Residues 1-16 (MSTALLDAVVKKNRVR) are Cytoplasmic-facing. The helical transmembrane segment at 17–37 (LIPFMLALYVLAFLDRSNIGF) threads the bilayer. At 38–54 (AKQTYQIDTGLSNEAYA) the chain is on the periplasmic side. The chain crosses the membrane as a helical span at residues 55–75 (LGAGIFFVVYAFLGVPANLLM). The Cytoplasmic segment spans residues 76-81 (RKLGAR). A helical transmembrane segment spans residues 82-102 (TWIGTTTLLWGFLSAAMAWAD). Topologically, residues 103-143 (TEAKFLIVRTLLRAAEAGFFPGMIYLTSQWFPQRNRASIMG) are periplasmic. Residues 144 to 164 (LFYMGAPLALTLGSPLSGALL) form a helical membrane-spanning segment. Residues 165-174 (EMHGFMGHPG) are Cytoplasmic-facing. Residues 175-195 (WFWMFVIEGLLAVGAGVFTFF) traverse the membrane as a helical segment. The Periplasmic portion of the chain corresponds to 196-242 (WLDDTPEQARFLSKQEKTLLINQLASEEQQKVTSRLSDALRNGRVWQ). The chain crosses the membrane as a helical span at residues 243-263 (LAIIYLTIQVAVYGLIFFLPT). Residues 264–274 (QVAALLGTKVG) are Cytoplasmic-facing. Residues 275–295 (FTASVVTAIPWVAALFGTWLI) form a helical membrane-spanning segment. Residues 296–324 (PRYSDKTGERRNVAALTLLAAGIGIGLSG) are Periplasmic-facing. The helical transmembrane segment at 325–345 (LLSPVMAIVALCVAAIGFIAV) threads the bilayer. Residues 346-361 (QPVFWTMPTQLLSGTA) lie on the Cytoplasmic side of the membrane. Residues 362-382 (LAAGIGFVNLFGAVGGFIAPI) form a helical membrane-spanning segment. The Periplasmic segment spans residues 383-394 (LRVKAETLFASD). The chain crosses the membrane as a helical span at residues 395–415 (AAGLLTLAAVAVIGSLIIFTL). At 416-429 (RVNRTVAQTDVAHH) the chain is on the cytoplasmic side.

This sequence belongs to the major facilitator superfamily. Phthalate permease family.

Its subcellular location is the cell inner membrane. This is Inner membrane transport protein RhmT (rhmT) from Escherichia coli (strain K12).